The primary structure comprises 82 residues: Large ribosomal subunit protein bL27 (82 aa).

Residues 1 to 20 (MAHKKGASSSRNGRDSNPQY) are disordered. The segment covering 7–19 (ASSSRNGRDSNPQ) has biased composition (polar residues).

Belongs to the bacterial ribosomal protein bL27 family.

The polypeptide is Large ribosomal subunit protein bL27 (Bifidobacterium longum (strain NCC 2705)).